The following is a 341-amino-acid chain: HTH-type transcriptional repressor PurR (341 aa).

Residues 2-56 enclose the HTH lacI-type domain; that stretch reads ATIKDVAKRANVSTTTVSHVINKTRFVAEETRNAVWAAIKELHYSPSAVARSLKV. The segment at residues 4 to 23 is a DNA-binding region (H-T-H motif); sequence IKDVAKRANVSTTTVSHVIN. The DNA-binding element occupies 48 to 56; sequence SAVARSLKV. Positions 73, 190, 192, 221, and 275 each coordinate hypoxanthine.

As to quaternary structure, homodimer.

The protein operates within purine metabolism; purine nucleotide biosynthesis [regulation]. Functionally, is the main repressor of the genes involved in the de novo synthesis of purine nucleotides, regulating purB, purC, purEK, purF, purHD, purL, purMN and guaBA expression. PurR is allosterically activated to bind its cognate DNA by binding the purine corepressors, hypoxanthine or guanine, thereby effecting transcription repression. This Escherichia fergusonii (strain ATCC 35469 / DSM 13698 / CCUG 18766 / IAM 14443 / JCM 21226 / LMG 7866 / NBRC 102419 / NCTC 12128 / CDC 0568-73) protein is HTH-type transcriptional repressor PurR.